We begin with the raw amino-acid sequence, 388 residues long: Acyl-CoA dehydrogenase fadE12 (388 aa).

The protein belongs to the acyl-CoA dehydrogenase family. Requires FAD as cofactor.

It carries out the reaction a 2,3-saturated acyl-CoA + A = a 2,3-dehydroacyl-CoA + AH2. This is Acyl-CoA dehydrogenase fadE12 (fadE12) from Mycobacterium tuberculosis (strain CDC 1551 / Oshkosh).